The chain runs to 664 residues: MANFKMVSPFKAAGDQVKAIENIAKSFGEGKNKITLVGVTGSGKTFTMAEVITRVKKPTLILSHNKTLAAQLFREFKEFFPENAVEYFVSYYDYYQPEAYVPSSDTFIEKDMSMNEEIDKLRLRATSSLLERDDVIIVSSVSCIYGLGSPEDYMNSVVMLQVGDKIDRDQIIRKFLHIQYARNDIDFSRGNFRVRGDTIEIMPSYQEEGIRIELFGDEIDGLSKIDPLTGKVKIKLDRVVVYPAKHFITSGPKIKDAMEKIKEEMAAQKEYFLKQGKHLEAERIESRTNYDMEMLLELGYCSGIENYSRHLTGRAEGERPACLLDYFPGKDFLLIIDESHVTLPQIGGMYAGDRSRKQTLVEFGFRLPSALDNRPLNFTEFEAMTPRTLYVSATPDQNELNKSEAVFEQIIRPTGLLDPVVEVRPTTNQIEDLLNEIRLRINQKERVLITTLTKKMSEDLTDYYKEVGLKIAYLHSEIDTIERTEIIRDLRKGVYDCIVGINLLREGLDIPEVSLVAILDADKEGFLRNYKSLVQTIGRAARNVNGKAILYADRMTDSIKKAMSETERRRLIQEAHNEKMGITPQTIQKEIHDILPREMAEEDSKEEALKDLEKEFTLKKYKTKDKLREALKREMLRYANDMDFEKAAMFRDKMLALGPDKIET.

In terms of domain architecture, Helicase ATP-binding spans 25 to 182 (KSFGEGKNKI…RKFLHIQYAR (158 aa)). 38 to 45 (GVTGSGKT) serves as a coordination point for ATP. The Beta-hairpin signature appears at 91-114 (YYDYYQPEAYVPSSDTFIEKDMSM). Residues 429 to 595 (QIEDLLNEIR…TIQKEIHDIL (167 aa)) enclose the Helicase C-terminal domain. The UVR domain maps to 625–660 (DKLREALKREMLRYANDMDFEKAAMFRDKMLALGPD).

It belongs to the UvrB family. Forms a heterotetramer with UvrA during the search for lesions. Interacts with UvrC in an incision complex.

It localises to the cytoplasm. In terms of biological role, the UvrABC repair system catalyzes the recognition and processing of DNA lesions. A damage recognition complex composed of 2 UvrA and 2 UvrB subunits scans DNA for abnormalities. Upon binding of the UvrA(2)B(2) complex to a putative damaged site, the DNA wraps around one UvrB monomer. DNA wrap is dependent on ATP binding by UvrB and probably causes local melting of the DNA helix, facilitating insertion of UvrB beta-hairpin between the DNA strands. Then UvrB probes one DNA strand for the presence of a lesion. If a lesion is found the UvrA subunits dissociate and the UvrB-DNA preincision complex is formed. This complex is subsequently bound by UvrC and the second UvrB is released. If no lesion is found, the DNA wraps around the other UvrB subunit that will check the other stand for damage. The sequence is that of UvrABC system protein B from Leptospira biflexa serovar Patoc (strain Patoc 1 / Ames).